The following is a 185-amino-acid chain: Ribosome-recycling factor (185 aa).

Belongs to the RRF family.

It localises to the cytoplasm. Responsible for the release of ribosomes from messenger RNA at the termination of protein biosynthesis. May increase the efficiency of translation by recycling ribosomes from one round of translation to another. This Clostridium beijerinckii (strain ATCC 51743 / NCIMB 8052) (Clostridium acetobutylicum) protein is Ribosome-recycling factor.